A 114-amino-acid polypeptide reads, in one-letter code: UPF0342 protein OEOE_0901 (114 aa).

This sequence belongs to the UPF0342 family.

In Oenococcus oeni (strain ATCC BAA-331 / PSU-1), this protein is UPF0342 protein OEOE_0901.